A 132-amino-acid polypeptide reads, in one-letter code: Histone H2A.2 (132 aa).

Belongs to the histone H2A family. The nucleosome is a histone octamer containing two molecules each of H2A, H2B, H3 and H4 assembled in one H3-H4 heterotetramer and two H2A-H2B heterodimers. The octamer wraps approximately 147 bp of DNA.

It is found in the nucleus. It localises to the chromosome. Core component of nucleosome. Nucleosomes wrap and compact DNA into chromatin, limiting DNA accessibility to the cellular machineries which require DNA as a template. Histones thereby play a central role in transcription regulation, DNA repair, DNA replication and chromosomal stability. DNA accessibility is regulated via a complex set of post-translational modifications of histones, also called histone code, and nucleosome remodeling. In Leishmania infantum, this protein is Histone H2A.2.